Reading from the N-terminus, the 93-residue chain is Probable Fe(2+)-trafficking protein (93 aa).

Belongs to the Fe(2+)-trafficking protein family.

In terms of biological role, could be a mediator in iron transactions between iron acquisition and iron-requiring processes, such as synthesis and/or repair of Fe-S clusters in biosynthetic enzymes. The chain is Probable Fe(2+)-trafficking protein from Polaromonas naphthalenivorans (strain CJ2).